Reading from the N-terminus, the 453-residue chain is Exodeoxyribonuclease 7 large subunit (453 aa).

This sequence belongs to the XseA family. Heterooligomer composed of large and small subunits.

The protein localises to the cytoplasm. The catalysed reaction is Exonucleolytic cleavage in either 5'- to 3'- or 3'- to 5'-direction to yield nucleoside 5'-phosphates.. In terms of biological role, bidirectionally degrades single-stranded DNA into large acid-insoluble oligonucleotides, which are then degraded further into small acid-soluble oligonucleotides. This Geobacter metallireducens (strain ATCC 53774 / DSM 7210 / GS-15) protein is Exodeoxyribonuclease 7 large subunit.